We begin with the raw amino-acid sequence, 157 residues long: Protein-export protein SecB (157 aa).

This sequence belongs to the SecB family. Homotetramer, a dimer of dimers. One homotetramer interacts with 1 SecA dimer.

It is found in the cytoplasm. Its function is as follows. One of the proteins required for the normal export of preproteins out of the cell cytoplasm. It is a molecular chaperone that binds to a subset of precursor proteins, maintaining them in a translocation-competent state. It also specifically binds to its receptor SecA. The polypeptide is Protein-export protein SecB (Shewanella frigidimarina (strain NCIMB 400)).